A 121-amino-acid polypeptide reads, in one-letter code: uncharacterized protein (121 aa).

The RRM domain occupies 10–87 (YIIIVTGVHP…EKLEVDFAFL (78 aa)). The disordered stretch occupies residues 90-121 (PERAPRPSISTRSRSQSPEVQHRDRDVAMAEP). A compositionally biased stretch (polar residues) spans 97–108 (SISTRSRSQSPE). The span at 109–121 (VQHRDRDVAMAEP) shows a compositional bias: basic and acidic residues.

The protein resides in the cytoplasm. It is found in the nucleus. This is an uncharacterized protein from Schizosaccharomyces pombe (strain 972 / ATCC 24843) (Fission yeast).